The following is a 128-amino-acid chain: Fluoride-specific ion channel FluC (128 aa).

4 consecutive transmembrane segments (helical) span residues 5–25, 34–54, 67–87, and 99–119; these read LFIS…GLLF, FGAL…LGLF, FLIT…SEVV, and FCVL…GIWI. Na(+) contacts are provided by Gly-74 and Thr-77.

This sequence belongs to the fluoride channel Fluc/FEX (TC 1.A.43) family.

It is found in the cell inner membrane. The enzyme catalyses fluoride(in) = fluoride(out). Its activity is regulated as follows. Na(+) is not transported, but it plays an essential structural role and its presence is essential for fluoride channel function. In terms of biological role, fluoride-specific ion channel. Important for reducing fluoride concentration in the cell, thus reducing its toxicity. This Haemophilus influenzae (strain PittEE) protein is Fluoride-specific ion channel FluC.